A 368-amino-acid chain; its full sequence is MNSTSTHFVPPRRVGIYEPVHQFGMWGESFKSNISNGTMNTPNHIIIPNNQKLDNNVSEDTSHGTAGTPHMFDQEASTSRHPDKIQRRLAQNREAARKSRLRKKAYVQQLETSRLKLIQLEQELDRARQQGFYVGNGIDTNSLGFSETMNPGIAAFEMEYGHWVEEQNRQICELRTVLHGHINDIELRSLVENAMKHYFELFRMKSSAAKADVFFVMSGMWRTSAERFFLWIGGFRPSDLLKVLLPHFDVLTDQQLLDVCNLKQSCQQAEDALTQGMEKLQHTLADCVAAGQLGEGSYIPQVNSAMDRLEALVSFVNQADHLRHETLQQMYRILTTRQAARGLLALGEYFQRLRALSSSWATRHREPT.

Residues 53 to 65 are compositionally biased toward polar residues; that stretch reads LDNNVSEDTSHGT. Residues 53 to 83 form a disordered region; it reads LDNNVSEDTSHGTAGTPHMFDQEASTSRHPD. The bZIP domain occupies 82–145; that stretch reads PDKIQRRLAQ…NGIDTNSLGF (64 aa). 2 coiled-coil regions span residues 83–131 and 261–281; these read DKIQ…RQQG and NLKQ…EKLQ. The segment at 84–104 is basic motif; that stretch reads KIQRRLAQNREAARKSRLRKK. The tract at residues 110-124 is leucine-zipper; sequence LETSRLKLIQLEQEL. Positions 153 to 363 constitute a DOG1 domain; sequence IAAFEMEYGH…RALSSSWATR (211 aa). The cysteines at positions 260 and 266 are disulfide-linked.

Belongs to the bZIP family. As to quaternary structure, binds DNA as a dimer. The reduced form interacts with NPR1. As to expression, predominantly expressed in roots.

The protein localises to the nucleus. Functionally, transcriptional activator that binds specifically to the DNA sequence 5'-TGACG-3'. Recognizes ocs elements like the as-1 motif of the cauliflower mosaic virus 35S promoter. Binding to the as-1-like cis elements mediate auxin- and salicylic acid-inducible transcription. May be involved in the induction of the systemic acquired resistance (SAR) via its interaction with NPR1. Could also bind to the Hex-motif (5'-TGACGTGG-3') another cis-acting element found in plant histone promoters. In Arabidopsis thaliana (Mouse-ear cress), this protein is Transcription factor TGA1 (TGA1).